The chain runs to 233 residues: Clathrin light chain (233 aa).

The disordered stretch occupies residues 1–124 (MSEKFPPLED…EDRSEVVDQW (124 aa)). A compositionally biased stretch (basic and acidic residues) spans 17 to 43 (PNDKKDDDTDFLKREAEILGDEFKTEQ). Thr-49 carries the post-translational modification Phosphothreonine. Ser-52 carries the phosphoserine modification. The segment covering 56 to 67 (DDDEIRDFEEQF) has biased composition (acidic residues). Residues 69 to 92 (DINSANGAVSSDQNGSATVSSGND) show a composition bias toward polar residues. Residues 112-124 (SVKEDRSEVVDQW) show a composition bias toward basic and acidic residues. A coiled-coil region spans residues 125-186 (KQRRAVEIHE…EAFLKKRDEF (62 aa)). The tract at residues 144–204 (KELQDEAIKH…DRALQLINQD (61 aa)) is involved in binding clathrin heavy chain.

This sequence belongs to the clathrin light chain family. In terms of assembly, clathrin coats are formed from molecules containing 3 heavy chains and 3 light chains. Interacts with the auxilin-like clathrin uncoating factor SWA2.

It localises to the cytoplasmic vesicle membrane. It is found in the membrane. Its subcellular location is the coated pit. Clathrin is the major protein of the polyhedral coat of coated pits and vesicles. In yeast, it is involved in the retention of proteins in an intracellular membrane compartment, presumably the trans-Golgi. The yeast light chain is important for cell growth. The light chain may help to properly orient the assembly/ disassembly of the clathrin coats. The chain is Clathrin light chain (CLC1) from Saccharomyces cerevisiae (strain ATCC 204508 / S288c) (Baker's yeast).